The following is a 311-amino-acid chain: MATLIDADLLTAIVTPFDENNKIDFSSLEKLVNYLIGQGCNGFVVGGTTGETPTLTHDEKIDLYKHFSQFVNKRVPIIAGTGSNNTAETIAFTNEVAQIEGIDYALIVVPPYNKPNQRSMVAHFSAINDATKIPFLIYNIPGRTGVKMEKETIVQLSRLDNIKGIKQCASLEEMEYIIENKDPDFQVFTGEDTQALTARLLGANGVISVASHIYANQMRRMYDSLYEGNYPLAAKIQRWLTPRMQALFMYPSPAPVKAVLNAQGLNVGGCRLPLVELNDEEKITLAQRLGLDDNALMQKLPLDLGKELEDD.

T49 provides a ligand contact to pyruvate. Y138 serves as the catalytic Proton donor/acceptor. The active-site Schiff-base intermediate with substrate is K166. I207 provides a ligand contact to pyruvate.

Belongs to the DapA family. Homotetramer; dimer of dimers.

Its subcellular location is the cytoplasm. It carries out the reaction L-aspartate 4-semialdehyde + pyruvate = (2S,4S)-4-hydroxy-2,3,4,5-tetrahydrodipicolinate + H2O + H(+). It participates in amino-acid biosynthesis; L-lysine biosynthesis via DAP pathway; (S)-tetrahydrodipicolinate from L-aspartate: step 3/4. Functionally, catalyzes the condensation of (S)-aspartate-beta-semialdehyde [(S)-ASA] and pyruvate to 4-hydroxy-tetrahydrodipicolinate (HTPA). This Lactobacillus acidophilus (strain ATCC 700396 / NCK56 / N2 / NCFM) protein is 4-hydroxy-tetrahydrodipicolinate synthase.